The chain runs to 290 residues: Small ribosomal subunit protein uS2 (290 aa).

Residues 263 to 282 (ATAGATWEAEAGGDWAAESA) are compositionally biased toward low complexity. Positions 263–290 (ATAGATWEAEAGGDWAAESAQPNPETKW) are disordered.

This sequence belongs to the universal ribosomal protein uS2 family. In terms of assembly, component of the small ribosomal subunit. Mature ribosomes consist of a small (40S) and a large (60S) subunit. The 40S subunit contains about 33 different proteins and 1 molecule of RNA (18S). The 60S subunit contains about 49 different proteins and 3 molecules of RNA (25S, 5.8S and 5S). Interacts with rps21.

It localises to the cytoplasm. In terms of biological role, required for the assembly and/or stability of the 40S ribosomal subunit. Required for the processing of the 20S rRNA-precursor to mature 18S rRNA in a late step of the maturation of 40S ribosomal subunits. The sequence is that of Small ribosomal subunit protein uS2 (rps0) from Talaromyces stipitatus (strain ATCC 10500 / CBS 375.48 / QM 6759 / NRRL 1006) (Penicillium stipitatum).